A 70-amino-acid polypeptide reads, in one-letter code: Toxin Isom2 (70 aa).

The region spanning 2–65 is the LCN-type CS-alpha/beta domain; that stretch reads KNGYAVDSSG…ISDTRKKYCD (64 aa). 4 cysteine pairs are disulfide-bonded: Cys-16–Cys-37, Cys-22–Cys-42, Cys-26–Cys-44, and Cys-38–Cys-64.

In terms of tissue distribution, expressed by the venom gland.

It is found in the secreted. In terms of biological role, excitatory insect beta-toxins induce a spastic paralysis. They bind voltage-independently at site-4 of sodium channels (Nav) and shift the voltage of activation toward more negative potentials thereby affecting sodium channel activation and promoting spontaneous and repetitive firing. The polypeptide is Toxin Isom2 (Isometrus vittatus (Bark scorpion)).